Reading from the N-terminus, the 306-residue chain is Ribonuclease Z (306 aa).

Zn(2+) is bound by residues His63, His65, Asp67, His68, His141, Asp211, and His269. Catalysis depends on Asp67, which acts as the Proton acceptor.

The protein belongs to the RNase Z family. In terms of assembly, homodimer. Zn(2+) is required as a cofactor.

It catalyses the reaction Endonucleolytic cleavage of RNA, removing extra 3' nucleotides from tRNA precursor, generating 3' termini of tRNAs. A 3'-hydroxy group is left at the tRNA terminus and a 5'-phosphoryl group is left at the trailer molecule.. Its function is as follows. Zinc phosphodiesterase, which displays some tRNA 3'-processing endonuclease activity. Probably involved in tRNA maturation, by removing a 3'-trailer from precursor tRNA. This is Ribonuclease Z from Staphylococcus saprophyticus subsp. saprophyticus (strain ATCC 15305 / DSM 20229 / NCIMB 8711 / NCTC 7292 / S-41).